Reading from the N-terminus, the 151-residue chain is SsrA-binding protein (151 aa).

Belongs to the SmpB family.

Its subcellular location is the cytoplasm. Required for rescue of stalled ribosomes mediated by trans-translation. Binds to transfer-messenger RNA (tmRNA), required for stable association of tmRNA with ribosomes. tmRNA and SmpB together mimic tRNA shape, replacing the anticodon stem-loop with SmpB. tmRNA is encoded by the ssrA gene; the 2 termini fold to resemble tRNA(Ala) and it encodes a 'tag peptide', a short internal open reading frame. During trans-translation Ala-aminoacylated tmRNA acts like a tRNA, entering the A-site of stalled ribosomes, displacing the stalled mRNA. The ribosome then switches to translate the ORF on the tmRNA; the nascent peptide is terminated with the 'tag peptide' encoded by the tmRNA and targeted for degradation. The ribosome is freed to recommence translation, which seems to be the essential function of trans-translation. This chain is SsrA-binding protein, found in Chlamydia muridarum (strain MoPn / Nigg).